The chain runs to 488 residues: (S)-N-methylcoclaurine 3'-hydroxylase isozyme 2 (488 aa).

Residues 3-23 (VVTVALIAVIISSILYLLFGS) traverse the membrane as a helical segment. Position 430 (cysteine 430) interacts with heme.

Belongs to the cytochrome P450 family. It depends on heme as a cofactor.

The protein resides in the endoplasmic reticulum membrane. It localises to the microsome membrane. The enzyme catalyses (S)-N-methylcoclaurine + reduced [NADPH--hemoprotein reductase] + O2 = (S)-3'-hydroxy-N-methylcoclaurine + oxidized [NADPH--hemoprotein reductase] + H2O + H(+). The protein operates within alkaloid biosynthesis; (S)-reticuline biosynthesis; (S)-reticuline from (S)-norcoclaurine: step 3/4. Functionally, 3'-hydroxylation of (S)-N-methylcoclaurine. This is (S)-N-methylcoclaurine 3'-hydroxylase isozyme 2 (CYP80B2) from Eschscholzia californica (California poppy).